The chain runs to 595 residues: MTRSPRRPLFAVSLVLSAMLLAGAAHAAVSNEEILQDPKNPQQIVTNGLGVQGQRYSPLDLLNVNNVKELRPVWAFSFGGEKQRGQQAQPLIKDGVMYLTGSYSRVFAVDARTGKKLWQYDARLPDDIRPCCDVINRGVALYGNLVFFGTLDAKLVALNKDTGKVVWSKKVADHKEGYSISAAPMIVNGKLITGVAGGEFGVVGKIQAYNPENGELLWMRPTVEGHMGYVYKDGKAIENGISGGEAGKTWPGDLWKTGGAAPWLGGYYDPETNLILFGTGNPAPWNSHLRPGDNLYSSSRLALNPDDGTIKWHFQSTPHDGWDFDGVNELISFNYKDGGKEVKAAATADRNGFFYVLDRTNGKFIRGFPFVDKITWATGLDKDGRPIYNDASRPGAPGSEAKGSSVFVAPAFLGAKNWMPMAYNKDTGLFYVPSNEWGMDIWNEGIAYKKGAAFLGAGFTIKPLNEDYIGVLRAIDPVSGKEVWRHKNYAPLWGGVLTTKGNLVFTGTPEGFLQAFNAKTGDKVWEFQTGSGVLGSPVTWEMDGEQYVSVVSGWGGAVPLWGGEVAKRVKDFNQGGMLWTFKLPKQLQQTASVKP.

The signal sequence occupies residues Met-1–Ala-27. A pyrroloquinoline quinone-binding site is contributed by Gln-87. Cysteines 131 and 132 form a disulfide. 4 residues coordinate pyrroloquinoline quinone: Arg-137, Ser-181, Gly-197, and Gly-198. Glu-199 lines the Pr(3+) pocket. Trp-263 lines the pyrroloquinoline quinone pocket. Positions 281, 323, and 325 each coordinate Pr(3+). Asp-323 (proton acceptor) is an active-site residue. 4 residues coordinate pyrroloquinoline quinone: Arg-350, Asn-417, Trp-493, and Ala-557.

The protein belongs to the bacterial PQQ dehydrogenase family. Requires Pr(3+) as cofactor. The cofactor is Nd(3+). La(3+) is required as a cofactor. Ce(3+) serves as cofactor. It depends on Sm(3+) as a cofactor. Requires pyrroloquinoline quinone as cofactor. In terms of processing, the disulfide ring formed between the two adjacent cysteine residues Cys-131 and Cys-132 is essential for efficient electron transfer at pH 7 from PedH to its natural electron acceptor cytochrome c550.

The protein resides in the periplasm. It catalyses the reaction a primary alcohol + 2 Fe(III)-[cytochrome c] = an aldehyde + 2 Fe(II)-[cytochrome c] + 2 H(+). The catalysed reaction is ethanol + 2 Fe(III)-[cytochrome c] = acetaldehyde + 2 Fe(II)-[cytochrome c] + 2 H(+). It carries out the reaction butan-1-ol + 2 Fe(III)-[cytochrome c] = butanal + 2 Fe(II)-[cytochrome c] + 2 H(+). The enzyme catalyses butan-2-ol + 2 Fe(III)-[cytochrome c] = butan-2-one + 2 Fe(II)-[cytochrome c] + 2 H(+). It catalyses the reaction 2-phenylethanol + 2 Fe(III)-[cytochrome c] = 2-phenylacetaldehyde + 2 Fe(II)-[cytochrome c] + 2 H(+). The catalysed reaction is octan-1-ol + 2 Fe(III)-[cytochrome c] = octanal + 2 Fe(II)-[cytochrome c] + 2 H(+). It carries out the reaction hexan-1-ol + 2 Fe(III)-[cytochrome c] = hexanal + 2 Fe(II)-[cytochrome c] + 2 H(+). The enzyme catalyses cinnamyl alcohol + 2 Fe(III)-[cytochrome c] = cinnamaldehyde + 2 Fe(II)-[cytochrome c] + 2 H(+). It catalyses the reaction farnesol + 2 Fe(III)-[cytochrome c] = farnesal + 2 Fe(II)-[cytochrome c] + 2 H(+). The catalysed reaction is an aldehyde + 2 Fe(III)-[cytochrome c] + H2O = a carboxylate + 2 Fe(II)-[cytochrome c] + 3 H(+). It carries out the reaction acetaldehyde + 2 Fe(III)-[cytochrome c] + H2O = 2 Fe(II)-[cytochrome c] + acetate + 3 H(+). The enzyme catalyses butanal + 2 Fe(III)-[cytochrome c] + H2O = butanoate + 2 Fe(II)-[cytochrome c] + 3 H(+). It catalyses the reaction hexanal + 2 Fe(III)-[cytochrome c] + H2O = hexanoate + 2 Fe(II)-[cytochrome c] + 3 H(+). The catalysed reaction is octanal + 2 Fe(III)-[cytochrome c] + H2O = octanoate + 2 Fe(II)-[cytochrome c] + 3 H(+). In terms of biological role, alcohol dehydrogenase that catalyzes the oxidation of a range of substrates, including linear and aromatic primary and secondary alcohols, as well as aldehydes, but only in the presence of lanthanides, allowing bacterial growth with a variety of volatile organic compounds (VOCs) as carbon and energy sources. Is also involved in the transcriptional regulation of pedE and pedH, most likely acting as a lanthanide sensory module. Uses a specific inducible cytochrome c550, encoded by the adjacent gene in the locus, as electron acceptor. This chain is Quinoprotein alcohol dehydrogenase PedH, found in Pseudomonas putida (strain ATCC 47054 / DSM 6125 / CFBP 8728 / NCIMB 11950 / KT2440).